The chain runs to 90 residues: Kunitz-type serine protease inhibitor 1 (90 aa).

The N-terminal stretch at 1–24 is a signal peptide; the sequence is MSSGGLLLLLGLLTLWAELTPVSG. A Pyrrolidone carboxylic acid modification is found at glutamine 25. Residues 31–81 form the BPTI/Kunitz inhibitor domain; the sequence is CYLPADPGRCKAHIPRFYYDSASNKCNKFIYGGCPGNANNFKTWDECRQTC. Disulfide bonds link cysteine 31/cysteine 81, cysteine 40/cysteine 64, and cysteine 56/cysteine 77. Residues 86-90 constitute a propeptide that is removed on maturation; that stretch reads MGRPT.

It belongs to the venom Kunitz-type family. As to expression, expressed by the venom gland.

It localises to the secreted. Serine protease inhibitor that principally inhibits trypsin (Ki=0.34 nM). Also inhibits alpha-chymotrypsin (Ki=270 nM), plasmin, plasma and pancreatic kallikrein. This is Kunitz-type serine protease inhibitor 1 from Vipera ammodytes ammodytes (Western sand viper).